Consider the following 654-residue polypeptide: Chaperone protein HtpG (654 aa).

The a; substrate-binding stretch occupies residues 1–344 (MTVENAPQRE…SDDLPLNVSR (344 aa)). A b region spans residues 345 to 556 (ELLQDSQVVR…EGGSPAYLER (212 aa)). The tract at residues 557–654 (LLQQRGRGAG…AQTPASATAS (98 aa)) is c.

This sequence belongs to the heat shock protein 90 family. Homodimer.

It is found in the cytoplasm. In terms of biological role, molecular chaperone. Has ATPase activity. This chain is Chaperone protein HtpG, found in Myxococcus xanthus (strain DK1622).